The primary structure comprises 721 residues: 1,4-alpha-glucan branching enzyme GlgB (721 aa).

Aspartate 404 serves as the catalytic Nucleophile. Glutamate 457 functions as the Proton donor in the catalytic mechanism.

The protein belongs to the glycosyl hydrolase 13 family. GlgB subfamily. Monomer.

It carries out the reaction Transfers a segment of a (1-&gt;4)-alpha-D-glucan chain to a primary hydroxy group in a similar glucan chain.. Its pathway is glycan biosynthesis; glycogen biosynthesis. In terms of biological role, catalyzes the formation of the alpha-1,6-glucosidic linkages in glycogen by scission of a 1,4-alpha-linked oligosaccharide from growing alpha-1,4-glucan chains and the subsequent attachment of the oligosaccharide to the alpha-1,6 position. The sequence is that of 1,4-alpha-glucan branching enzyme GlgB from Bradyrhizobium diazoefficiens (strain JCM 10833 / BCRC 13528 / IAM 13628 / NBRC 14792 / USDA 110).